We begin with the raw amino-acid sequence, 88 residues long: Small ribosomal subunit protein bS16 (88 aa).

It belongs to the bacterial ribosomal protein bS16 family.

This chain is Small ribosomal subunit protein bS16, found in Buchnera aphidicola subsp. Cinara cedri (strain Cc).